A 457-amino-acid chain; its full sequence is Adenylosuccinate synthetase isozyme 1 (457 aa).

The interval 1-25 (MSGTRASNDRPPSAGGVKRGRLQHE) is disordered. Residues 42 to 48 (GDEGKGK) and 70 to 72 (GHT) each bind GTP. D43 (proton acceptor) is an active-site residue. Mg(2+)-binding residues include D43 and G70. A substrate-binding site is contributed by D43. IMP contacts are provided by residues 43 to 46 (DEGK), 68 to 71 (NAGH), T163, R177, N256, T271, and R335. H71 functions as the Proton donor in the catalytic mechanism. 331-337 (VTTGRKR) contributes to the substrate binding site. GTP contacts are provided by residues R337, 363–365 (KLD), and 445–448 (GVGK).

It belongs to the adenylosuccinate synthetase family. As to quaternary structure, homodimer. Mg(2+) is required as a cofactor. Predominantly expressed in the striated muscle tissues.

The protein localises to the cytoplasm. It catalyses the reaction IMP + L-aspartate + GTP = N(6)-(1,2-dicarboxyethyl)-AMP + GDP + phosphate + 2 H(+). Its pathway is purine metabolism; AMP biosynthesis via de novo pathway; AMP from IMP: step 1/2. Functionally, component of the purine nucleotide cycle (PNC), which interconverts IMP and AMP to regulate the nucleotide levels in various tissues, and which contributes to glycolysis and ammoniagenesis. Catalyzes the first committed step in the biosynthesis of AMP from IMP. This Sus scrofa (Pig) protein is Adenylosuccinate synthetase isozyme 1.